Here is a 191-residue protein sequence, read N- to C-terminus: Protein UL140 (191 aa).

Residues 28 to 48 (TLVVFGFIVTLLFFLFMLYFW) traverse the membrane as a helical segment.

The protein localises to the host membrane. The chain is Protein UL140 (UL140) from Homo sapiens (Human).